A 300-amino-acid chain; its full sequence is Cell surface glycoprotein CD200 receptor 1-A (300 aa).

A signal peptide spans 1-24 (MEIAGKAVCVFLLLAIIKLRRSEG). The Ig-like V-type domain occupies 25–124 (INRVSANLGH…GNFHRLYHLT (100 aa)). Residues 25 to 213 (INRVSANLGH…SINCSSSYRD (189 aa)) are Extracellular-facing. 2 cysteine pairs are disulfide-bonded: Cys-40–Cys-108 and Cys-143–Cys-192. 6 N-linked (GlcNAc...) asparagine glycosylation sites follow: Asn-45, Asn-76, Asn-105, Asn-171, Asn-200, and Asn-206. In terms of domain architecture, Ig-like C2-type spans 122–206 (HLTVIVAPRM…ATLNETKSIN (85 aa)). Residues 214–234 (LILCIAIILSFLIIITFMAVI) form a helical membrane-spanning segment. The Cytoplasmic portion of the chain corresponds to 235–300 (YYLKLHGCRF…NLPQGQSPAT (66 aa)).

This sequence belongs to the CD200R family. In terms of processing, glycosylated. Phosphorylated. In terms of tissue distribution, highly expressed in macrophages, peripheral blood lymphocytes (PBL) and peripheral blood mononuclear cells (PBMC). Weakly expressed in bursa, thymus, spleen, liver and brain.

It localises to the membrane. Its subcellular location is the secreted. The protein is Cell surface glycoprotein CD200 receptor 1-A (CD200R1A) of Gallus gallus (Chicken).